The chain runs to 257 residues: GTP cyclohydrolase FolE2 (257 aa).

The protein belongs to the GTP cyclohydrolase IV family.

The catalysed reaction is GTP + H2O = 7,8-dihydroneopterin 3'-triphosphate + formate + H(+). It functions in the pathway cofactor biosynthesis; 7,8-dihydroneopterin triphosphate biosynthesis; 7,8-dihydroneopterin triphosphate from GTP: step 1/1. Its function is as follows. Converts GTP to 7,8-dihydroneopterin triphosphate. This chain is GTP cyclohydrolase FolE2, found in Kosmotoga olearia (strain ATCC BAA-1733 / DSM 21960 / TBF 19.5.1).